Consider the following 147-residue polypeptide: MTQAFWQTKTLDEMSDDEWESLCDGCGQCCLHKLMDDDTDEIYFTNVACNQLNIKTCQCSNYEDRFRYEPDCIKLTRYNLPTFEWLPMTCAYRLLAEGKPLADWHPLIAGNKAKMHQGNISVRYIAVPEVEVEDWEDHILNRPKGRG.

It belongs to the UPF0260 family.

The protein is UPF0260 protein PMI1174 of Proteus mirabilis (strain HI4320).